The sequence spans 263 residues: Energy-coupling factor transporter transmembrane protein EcfT (263 aa).

Transmembrane regions (helical) follow at residues 22–42 (IIFA…ATNI), 69–89 (ILFL…EGAV), 105–125 (LAII…LVTL), and 243–263 (TGLI…RGGF).

This sequence belongs to the energy-coupling factor EcfT family. In terms of assembly, forms a stable energy-coupling factor (ECF) transporter complex composed of 2 membrane-embedded substrate-binding proteins (S component), 2 ATP-binding proteins (A component) and 2 transmembrane proteins (T component). May be able to interact with more than 1 S component at a time.

The protein resides in the cell membrane. Functionally, transmembrane (T) component of an energy-coupling factor (ECF) ABC-transporter complex. Unlike classic ABC transporters this ECF transporter provides the energy necessary to transport a number of different substrates. This is Energy-coupling factor transporter transmembrane protein EcfT from Exiguobacterium sibiricum (strain DSM 17290 / CCUG 55495 / CIP 109462 / JCM 13490 / 255-15).